Consider the following 64-residue polypeptide: Potassium channel toxin alpha-KTx J123 (64 aa).

The first 21 residues, 1-21, serve as a signal peptide directing secretion; the sequence is MNKVYLVAVLVLFLALTINES. Intrachain disulfides connect Cys30–Cys52, Cys37–Cys60, and Cys41–Cys62.

It belongs to the short scorpion toxin superfamily. Potassium channel inhibitor family. Alpha-KTx 11 subfamily. Expressed by the venom gland.

The protein resides in the secreted. Functionally, this recombinant toxin inhibits mammalian voltage-gated potassium channels Kv1.3/KCNA3 (IC(50)=0.79 nM) and Kv1.2/KCNA2 (IC(50)=26.4 nM). The sequence is that of Potassium channel toxin alpha-KTx J123 from Olivierus martensii (Manchurian scorpion).